Reading from the N-terminus, the 362-residue chain is Formate dehydrogenase (362 aa).

Residues Val93 and Asn119 each coordinate substrate. NAD(+) contacts are provided by residues 174–175, Asp195, 230–234, Thr256, Asp282, 311–314, and Ser357; these read RI, PLHAG, and HYSG.

Belongs to the D-isomer specific 2-hydroxyacid dehydrogenase family. FDH subfamily. In terms of assembly, homodimer.

The protein localises to the cytoplasm. It carries out the reaction formate + NAD(+) = CO2 + NADH. Catalyzes the NAD(+)-dependent oxidation of formate to carbon dioxide. Formate oxidation is the final step in the methanol oxidation pathway in methylotrophic microorganisms. Has a role in the detoxification of exogenous formate in non-methylotrophic organisms. The protein is Formate dehydrogenase of Pichia angusta (Yeast).